The primary structure comprises 202 residues: Dephospho-CoA kinase (202 aa).

The 200-residue stretch at 3-202 (TIGITGGIGS…TKRPNPPDRL (200 aa)) folds into the DPCK domain. 11–16 (GSGKSV) lines the ATP pocket. A disordered region spans residues 138-161 (RAMARDGSSAETMRQRMLSQEREQ).

The protein belongs to the CoaE family.

The protein resides in the cytoplasm. The catalysed reaction is 3'-dephospho-CoA + ATP = ADP + CoA + H(+). Its pathway is cofactor biosynthesis; coenzyme A biosynthesis; CoA from (R)-pantothenate: step 5/5. Its function is as follows. Catalyzes the phosphorylation of the 3'-hydroxyl group of dephosphocoenzyme A to form coenzyme A. This is Dephospho-CoA kinase from Porphyromonas gingivalis (strain ATCC BAA-308 / W83).